Consider the following 91-residue polypeptide: UPF0250 protein BB0170 (91 aa).

It belongs to the UPF0250 family.

This Bordetella bronchiseptica (strain ATCC BAA-588 / NCTC 13252 / RB50) (Alcaligenes bronchisepticus) protein is UPF0250 protein BB0170.